A 137-amino-acid polypeptide reads, in one-letter code: Phosphatidylinositol N-acetylglucosaminyltransferase subunit P (137 aa).

Helical transmembrane passes span Val16–Gly36 and Met58–Leu78.

Belongs to the PIGP family.

The protein localises to the membrane. It catalyses the reaction a 1,2-diacyl-sn-glycero-3-phospho-(1D-myo-inositol) + UDP-N-acetyl-alpha-D-glucosamine = a 6-(N-acetyl-alpha-D-glucosaminyl)-1-(1,2-diacyl-sn-glycero-3-phospho)-1D-myo-inositol + UDP + H(+). Its pathway is glycolipid biosynthesis; glycosylphosphatidylinositol-anchor biosynthesis. Functionally, part of the complex catalyzing the transfer of N-acetylglucosamine from UDP-N-acetylglucosamine to phosphatidylinositol, the first step of GPI biosynthesis. This Arabidopsis thaliana (Mouse-ear cress) protein is Phosphatidylinositol N-acetylglucosaminyltransferase subunit P.